A 386-amino-acid polypeptide reads, in one-letter code: Patatin group M-2 (386 aa).

Residues 1 to 23 (MATTKSFLILFFMILATTSSTCA) form the signal peptide. The region spanning 32 to 229 (LSIDGGGIKG…TVGDPALLSL (198 aa)) is the PNPLA domain. Positions 36-41 (GGGIKG) match the GXGXXG motif. The GXSXG motif lies at 75 to 79 (GTSTG). Serine 77 (nucleophile) is an active-site residue. An N-linked (GlcNAc...) asparagine glycan is attached at asparagine 115. Aspartate 215 serves as the catalytic Proton acceptor. The DGA/G motif lies at 215–217 (DGG). Positions 321 to 384 (ENALTGTTTE…DRKKLRANKA (64 aa)) form a coiled coil.

The protein belongs to the patatin family. Tuber.

Its subcellular location is the vacuole. Its function is as follows. Probable lipolytic acyl hydrolase (LAH), an activity which is thought to be involved in the response of tubers to pathogens. The sequence is that of Patatin group M-2 from Solanum tuberosum (Potato).